A 225-amino-acid polypeptide reads, in one-letter code: Heptaprenylglyceryl phosphate synthase (225 aa).

Lysine 6 serves as a coordination point for sn-glycerol 1-phosphate. Positions 8 and 34 each coordinate Mg(2+). Sn-glycerol 1-phosphate contacts are provided by residues 153–158, glycine 183, and 203–204; these read YVEYSG and GN.

It belongs to the GGGP/HepGP synthase family. Group I subfamily. In terms of assembly, homodimer. The cofactor is Mg(2+).

It carries out the reaction sn-glycerol 1-phosphate + all-trans-heptaprenyl diphosphate = 3-heptaprenyl-sn-glycero-1-phosphate + diphosphate. It participates in membrane lipid metabolism; glycerophospholipid metabolism. In terms of biological role, prenyltransferase that catalyzes in vivo the transfer of the heptaprenyl moiety of heptaprenyl pyrophosphate (HepPP; 35 carbon atoms) to the C3 hydroxyl of sn-glycerol-1-phosphate (G1P), producing heptaprenylglyceryl phosphate (HepGP). This reaction is an ether-bond-formation step in the biosynthesis of archaea-type G1P-based membrane lipids found in Bacillales. The sequence is that of Heptaprenylglyceryl phosphate synthase from Listeria innocua serovar 6a (strain ATCC BAA-680 / CLIP 11262).